The following is a 444-amino-acid chain: Light-independent protochlorophyllide reductase subunit N (444 aa).

Cys36, Cys61, and Cys118 together coordinate [4Fe-4S] cluster.

This sequence belongs to the BchN/ChlN family. Protochlorophyllide reductase is composed of three subunits; BchL, BchN and BchB. Forms a heterotetramer of two BchB and two BchN subunits. [4Fe-4S] cluster is required as a cofactor.

It catalyses the reaction chlorophyllide a + oxidized 2[4Fe-4S]-[ferredoxin] + 2 ADP + 2 phosphate = protochlorophyllide a + reduced 2[4Fe-4S]-[ferredoxin] + 2 ATP + 2 H2O. It functions in the pathway porphyrin-containing compound metabolism; bacteriochlorophyll biosynthesis (light-independent). Component of the dark-operative protochlorophyllide reductase (DPOR) that uses Mg-ATP and reduced ferredoxin to reduce ring D of protochlorophyllide (Pchlide) to form chlorophyllide a (Chlide). This reaction is light-independent. The NB-protein (BchN-BchB) is the catalytic component of the complex. In Chloroflexus aurantiacus (strain ATCC 29366 / DSM 635 / J-10-fl), this protein is Light-independent protochlorophyllide reductase subunit N.